The following is a 225-amino-acid chain: MSPFQNFMILEEKQLLILMKTNSEICKELVSNPEKFNKLEQFVSLVEEWNKKINLTGFEGENLWKEGINESFFCFEKILETKNLNDFENKSWVDIGSGAGFPIIPFAIIYPKINFYIIESNSKRVRFLELVNEKLNLKIKIFNTRAENFSELKFDFVSARAVAHLDLLIKYFMKITKQDATGYFIKGPKIFEEKEEINNKKISIETLKIDKIKEKNVFVVKMNRI.

S-adenosyl-L-methionine contacts are provided by residues G96, F101, 146–147 (AE), and R160.

The protein belongs to the methyltransferase superfamily. RNA methyltransferase RsmG family.

The protein localises to the cytoplasm. Specifically methylates the N7 position of a guanine in 16S rRNA. The sequence is that of Ribosomal RNA small subunit methyltransferase G from Mycoplasma mobile (strain ATCC 43663 / 163K / NCTC 11711) (Mesomycoplasma mobile).